A 374-amino-acid polypeptide reads, in one-letter code: 5-hydroxytryptamine receptor 1D (374 aa).

Residues asparagine 5, asparagine 17, and asparagine 21 are each glycosylated (N-linked (GlcNAc...) asparagine). The next 3 helical transmembrane spans lie at isoleucine 36–leucine 61, leucine 73–alanine 94, and leucine 107–leucine 131. Cysteine 108 and cysteine 185 are disulfide-bonded. Positions 115 and 119 each coordinate serotonin. Residues aspartate 132 to tyrosine 134 carry the DRY motif; important for ligand-induced conformation changes motif. 4 helical membrane passes run alanine 152–tryptophan 173, isoleucine 192–glycine 215, lysine 298–isoleucine 323, and alanine 333–phenylalanine 356. A serotonin-binding site is contributed by serine 318. The short motif at asparagine 349–tyrosine 353 is the NPxxY motif; important for ligand-induced conformation changes and signaling element.

Belongs to the G-protein coupled receptor 1 family. In terms of assembly, homodimer. Heterodimer with HTR1B. Detected in dorsal raphe.

It localises to the cell membrane. Its function is as follows. G-protein coupled receptor for 5-hydroxytryptamine (serotonin). Also functions as a receptor for ergot alkaloid derivatives, various anxiolytic and antidepressant drugs and other psychoactive substances. Ligand binding causes a conformation change that triggers signaling via guanine nucleotide-binding proteins (G proteins) and modulates the activity of downstream effectors, such as adenylate cyclase. HTR1D is coupled to G(i)/G(o) G alpha proteins and mediates inhibitory neurotransmission by inhibiting adenylate cyclase activity. Regulates the release of 5-hydroxytryptamine in the brain, and thereby affects neural activity. May also play a role in regulating the release of other neurotransmitters. May play a role in vasoconstriction. In Rattus norvegicus (Rat), this protein is 5-hydroxytryptamine receptor 1D (Htr1d).